Reading from the N-terminus, the 594-residue chain is Maternal effect protein oskar (594 aa).

Low complexity predominate over residues 44–62; sequence QQQPKQQQQQQQHQSQHQH. A disordered region spans residues 44–68; it reads QQQPKQQQQQQQHQSQHQHQQQKQK. The 70-residue stretch at 174–243 folds into the HTH OST-type domain; it reads EYPDIDTEIR…SGKRIFNIKP (70 aa).

Interacts with smaug (smg). Posterior pole of the oocyte.

Functionally, organizes the germ plasm and directs localization of the posterior determinant nanos. Oskar protein is required to keep oskar RNA and staufen protein at the posterior pole. The chain is Maternal effect protein oskar (osk) from Drosophila virilis (Fruit fly).